A 953-amino-acid polypeptide reads, in one-letter code: UvrABC system protein A (953 aa).

Residue 33-40 coordinates ATP; sequence GLSGSGKS. 2 ABC transporter domains span residues 320-599 and 619-949; these read WGST…EESI and GHDN…RYLK. Residue 652–659 coordinates ATP; the sequence is GVSGSGKS. The C4-type zinc-finger motif lies at 752–778; the sequence is CEACQGDGLIKIEMHFLPDVYVKCDIC.

This sequence belongs to the ABC transporter superfamily. UvrA family. As to quaternary structure, forms a heterotetramer with UvrB during the search for lesions.

The protein resides in the cytoplasm. Functionally, the UvrABC repair system catalyzes the recognition and processing of DNA lesions. UvrA is an ATPase and a DNA-binding protein. A damage recognition complex composed of 2 UvrA and 2 UvrB subunits scans DNA for abnormalities. When the presence of a lesion has been verified by UvrB, the UvrA molecules dissociate. This Rickettsia typhi (strain ATCC VR-144 / Wilmington) protein is UvrABC system protein A.